The chain runs to 428 residues: Glutamate-1-semialdehyde 2,1-aminomutase (428 aa).

Position 265 is an N6-(pyridoxal phosphate)lysine (Lys-265).

Belongs to the class-III pyridoxal-phosphate-dependent aminotransferase family. HemL subfamily. In terms of assembly, homodimer. The cofactor is pyridoxal 5'-phosphate.

The protein localises to the cytoplasm. It catalyses the reaction (S)-4-amino-5-oxopentanoate = 5-aminolevulinate. It participates in porphyrin-containing compound metabolism; protoporphyrin-IX biosynthesis; 5-aminolevulinate from L-glutamyl-tRNA(Glu): step 2/2. In Shewanella loihica (strain ATCC BAA-1088 / PV-4), this protein is Glutamate-1-semialdehyde 2,1-aminomutase.